A 189-amino-acid chain; its full sequence is Glutathione-dependent formaldehyde-activating enzyme (189 aa).

In terms of domain architecture, CENP-V/GFA spans Phe20–Asp166. Residues Cys27, Cys29, Cys48, Cys50, Cys53, Cys95, and Cys98 each coordinate Zn(2+).

This sequence belongs to the Gfa family. Requires Zn(2+) as cofactor.

The catalysed reaction is S-(hydroxymethyl)glutathione = glutathione + formaldehyde. It functions in the pathway one-carbon metabolism; formaldehyde degradation; formate from formaldehyde (glutathione route): step 1/3. Catalyzes the condensation of formaldehyde and glutathione to S-hydroxymethylglutathione. The protein is Glutathione-dependent formaldehyde-activating enzyme of Mesorhizobium japonicum (strain LMG 29417 / CECT 9101 / MAFF 303099) (Mesorhizobium loti (strain MAFF 303099)).